Reading from the N-terminus, the 765-residue chain is Multifunctional tryptophan biosynthesis protein (765 aa).

The region spanning 2–196 is the Glutamine amidotransferase type-1 domain; the sequence is ATLLIDNYDS…LSLRGGNWDE (195 aa). 53–55 lines the L-glutamine pocket; the sequence is GPG. C81 functions as the Nucleophile; for GATase activity in the catalytic mechanism. L-glutamine-binding positions include Q85 and 131 to 132; that span reads SL. Active-site for GATase activity residues include H170 and E172. Residues 231–494 are indole-3-glycerol phosphate synthase; the sequence is TILSRIYAQR…NLKEFVAELL (264 aa). An N-(5'-phosphoribosyl)anthranilate isomerase region spans residues 512–765; the sequence is QVKICGISSV…VEKAKSINLQ (254 aa).

The enzyme catalyses N-(5-phospho-beta-D-ribosyl)anthranilate = 1-(2-carboxyphenylamino)-1-deoxy-D-ribulose 5-phosphate. It carries out the reaction 1-(2-carboxyphenylamino)-1-deoxy-D-ribulose 5-phosphate + H(+) = (1S,2R)-1-C-(indol-3-yl)glycerol 3-phosphate + CO2 + H2O. It catalyses the reaction chorismate + L-glutamine = anthranilate + pyruvate + L-glutamate + H(+). It functions in the pathway amino-acid biosynthesis; L-tryptophan biosynthesis; L-tryptophan from chorismate: step 1/5. Its pathway is amino-acid biosynthesis; L-tryptophan biosynthesis; L-tryptophan from chorismate: step 3/5. It participates in amino-acid biosynthesis; L-tryptophan biosynthesis; L-tryptophan from chorismate: step 4/5. Trifunctional enzyme bearing the Gln amidotransferase (GATase) domain of anthranilate synthase, indole-glycerolphosphate synthase, and phosphoribosylanthranilate isomerase activities. The sequence is that of Multifunctional tryptophan biosynthesis protein (trp1) from Phycomyces blakesleeanus.